The sequence spans 460 residues: Cysteine--tRNA ligase (460 aa).

Cys-29 serves as a coordination point for Zn(2+). The short motif at 31 to 41 (PTVYDFAHIGN) is the 'HIGH' region element. Zn(2+)-binding residues include Cys-227, His-252, and Glu-256. The 'KMSKS' region motif lies at 285–289 (KMSKS). Residue Lys-288 coordinates ATP.

The protein belongs to the class-I aminoacyl-tRNA synthetase family. In terms of assembly, monomer. Zn(2+) is required as a cofactor.

Its subcellular location is the cytoplasm. The enzyme catalyses tRNA(Cys) + L-cysteine + ATP = L-cysteinyl-tRNA(Cys) + AMP + diphosphate. The chain is Cysteine--tRNA ligase from Bradyrhizobium diazoefficiens (strain JCM 10833 / BCRC 13528 / IAM 13628 / NBRC 14792 / USDA 110).